We begin with the raw amino-acid sequence, 282 residues long: Bifunctional protein FolD (282 aa).

Residues 166 to 168 (GAS) and isoleucine 232 contribute to the NADP(+) site.

The protein belongs to the tetrahydrofolate dehydrogenase/cyclohydrolase family. Homodimer.

It catalyses the reaction (6R)-5,10-methylene-5,6,7,8-tetrahydrofolate + NADP(+) = (6R)-5,10-methenyltetrahydrofolate + NADPH. The enzyme catalyses (6R)-5,10-methenyltetrahydrofolate + H2O = (6R)-10-formyltetrahydrofolate + H(+). The protein operates within one-carbon metabolism; tetrahydrofolate interconversion. Its function is as follows. Catalyzes the oxidation of 5,10-methylenetetrahydrofolate to 5,10-methenyltetrahydrofolate and then the hydrolysis of 5,10-methenyltetrahydrofolate to 10-formyltetrahydrofolate. In Haemophilus influenzae (strain PittGG), this protein is Bifunctional protein FolD.